A 227-amino-acid polypeptide reads, in one-letter code: Cytochrome c oxidase subunit 2 (227 aa).

Residues 1–14 lie on the Mitochondrial intermembrane side of the membrane; sequence MAYPFQLGLQDATS. The helical transmembrane segment at 15–45 threads the bilayer; sequence PIMEELTNFHDHTLMIVFLISSLVLYIISLM. At 46-59 the chain is on the mitochondrial matrix side; the sequence is LTTKLTHTSTMDAQ. The chain crosses the membrane as a helical span at residues 60–87; it reads EVETIWTILPAVILILIALPSLRILYMM. Residues 88–227 lie on the Mitochondrial intermembrane side of the membrane; the sequence is DEINNPALTV…HFENWSASMI (140 aa). Residues His-161, Cys-196, Glu-198, Cys-200, His-204, and Met-207 each contribute to the Cu cation site. Residue Glu-198 participates in Mg(2+) binding.

This sequence belongs to the cytochrome c oxidase subunit 2 family. In terms of assembly, component of the cytochrome c oxidase (complex IV, CIV), a multisubunit enzyme composed of 14 subunits. The complex is composed of a catalytic core of 3 subunits MT-CO1, MT-CO2 and MT-CO3, encoded in the mitochondrial DNA, and 11 supernumerary subunits COX4I, COX5A, COX5B, COX6A, COX6B, COX6C, COX7A, COX7B, COX7C, COX8 and NDUFA4, which are encoded in the nuclear genome. The complex exists as a monomer or a dimer and forms supercomplexes (SCs) in the inner mitochondrial membrane with NADH-ubiquinone oxidoreductase (complex I, CI) and ubiquinol-cytochrome c oxidoreductase (cytochrome b-c1 complex, complex III, CIII), resulting in different assemblies (supercomplex SCI(1)III(2)IV(1) and megacomplex MCI(2)III(2)IV(2)). Found in a complex with TMEM177, COA6, COX18, COX20, SCO1 and SCO2. Interacts with TMEM177 in a COX20-dependent manner. Interacts with COX20. Interacts with COX16. Requires Cu cation as cofactor.

It is found in the mitochondrion inner membrane. The enzyme catalyses 4 Fe(II)-[cytochrome c] + O2 + 8 H(+)(in) = 4 Fe(III)-[cytochrome c] + 2 H2O + 4 H(+)(out). In terms of biological role, component of the cytochrome c oxidase, the last enzyme in the mitochondrial electron transport chain which drives oxidative phosphorylation. The respiratory chain contains 3 multisubunit complexes succinate dehydrogenase (complex II, CII), ubiquinol-cytochrome c oxidoreductase (cytochrome b-c1 complex, complex III, CIII) and cytochrome c oxidase (complex IV, CIV), that cooperate to transfer electrons derived from NADH and succinate to molecular oxygen, creating an electrochemical gradient over the inner membrane that drives transmembrane transport and the ATP synthase. Cytochrome c oxidase is the component of the respiratory chain that catalyzes the reduction of oxygen to water. Electrons originating from reduced cytochrome c in the intermembrane space (IMS) are transferred via the dinuclear copper A center (CU(A)) of subunit 2 and heme A of subunit 1 to the active site in subunit 1, a binuclear center (BNC) formed by heme A3 and copper B (CU(B)). The BNC reduces molecular oxygen to 2 water molecules using 4 electrons from cytochrome c in the IMS and 4 protons from the mitochondrial matrix. In Berylmys bowersi (Bower's white-toothed rat), this protein is Cytochrome c oxidase subunit 2 (MT-CO2).